A 114-amino-acid chain; its full sequence is Large ribosomal subunit protein uL22 (114 aa).

It belongs to the universal ribosomal protein uL22 family. Part of the 50S ribosomal subunit.

This protein binds specifically to 23S rRNA; its binding is stimulated by other ribosomal proteins, e.g. L4, L17, and L20. It is important during the early stages of 50S assembly. It makes multiple contacts with different domains of the 23S rRNA in the assembled 50S subunit and ribosome. Its function is as follows. The globular domain of the protein is located near the polypeptide exit tunnel on the outside of the subunit, while an extended beta-hairpin is found that lines the wall of the exit tunnel in the center of the 70S ribosome. This Lysinibacillus sphaericus (strain C3-41) protein is Large ribosomal subunit protein uL22.